The sequence spans 608 residues: Sensor protein kinase WalK (608 aa).

Transmembrane regions (helical) follow at residues 14–34 and 183–203; these read LVIVYVLLIIIGMQIIGLYFT and IFIVGTAISLLITVILGFFIA. Residues 204–256 form the HAMP domain; the sequence is RTITKPITDMRNQTVEMSRGNYTQRVKIYGNDEIGELALAFNNLSKRVQEAQA. The PAS domain maps to 261 to 331; sequence EKRRLDSVIT…EIQENNDSFL (71 aa). Zn(2+) is bound by residues His-271, Asp-274, His-364, and Glu-368. Residues 314-378 enclose the PAC domain; that stretch reads LEDEFKLEEI…QQQVERERRE (65 aa). Residues 382–600 form the Histidine kinase domain; sequence NVSHELRTPL…SIFITLPCEV (219 aa). Phosphohistidine; by autocatalysis is present on His-385.

In terms of assembly, forms homodimers. Forms homooligomers. Post-translationally, autophosphorylated.

It is found in the cell membrane. The catalysed reaction is ATP + protein L-histidine = ADP + protein N-phospho-L-histidine.. With respect to regulation, by zinc. Zinc-binding negatively regulates WalK kinase activity and thus autophosphorylation. Its function is as follows. Member of the two-component regulatory system WalK/WalR that regulates genes involved in cell wall metabolism, virulence regulation, biofilm production, oxidative stress resistance and antibiotic resistance via direct or indirect regulation of autolysins. Functions as a sensor protein kinase which is autophosphorylated at a histidine residue in the dimerization domain and transfers its phosphate group to the conserved aspartic acid residue in the regulatory domain of WalR. In turn, WalR binds to the upstream promoter regions of the target genes to positively and negatively regulate their expression. The protein is Sensor protein kinase WalK (walK) of Staphylococcus aureus (strain Newman).